Reading from the N-terminus, the 62-residue chain is Large ribosomal subunit protein uL30 (62 aa).

This sequence belongs to the universal ribosomal protein uL30 family. As to quaternary structure, part of the 50S ribosomal subunit.

This chain is Large ribosomal subunit protein uL30, found in Staphylococcus carnosus (strain TM300).